The chain runs to 404 residues: Formate-dependent phosphoribosylglycinamide formyltransferase (404 aa).

N(1)-(5-phospho-beta-D-ribosyl)glycinamide contacts are provided by residues 25-26 and Glu85; that span reads EL. Residues Arg118, Lys159, 164–169, 199–202, and Glu207 each bind ATP; these read SSGKGQ and EGFI. Residues 123–318 form the ATP-grasp domain; that stretch reads RLAAEELGLP…EFELHARAIL (196 aa). Residues Glu277 and Glu289 each coordinate Mg(2+). N(1)-(5-phospho-beta-D-ribosyl)glycinamide-binding positions include Asp296, Lys365, and 372 to 373; that span reads RR.

The protein belongs to the PurK/PurT family. In terms of assembly, homodimer.

It catalyses the reaction N(1)-(5-phospho-beta-D-ribosyl)glycinamide + formate + ATP = N(2)-formyl-N(1)-(5-phospho-beta-D-ribosyl)glycinamide + ADP + phosphate + H(+). It functions in the pathway purine metabolism; IMP biosynthesis via de novo pathway; N(2)-formyl-N(1)-(5-phospho-D-ribosyl)glycinamide from N(1)-(5-phospho-D-ribosyl)glycinamide (formate route): step 1/1. In terms of biological role, involved in the de novo purine biosynthesis. Catalyzes the transfer of formate to 5-phospho-ribosyl-glycinamide (GAR), producing 5-phospho-ribosyl-N-formylglycinamide (FGAR). Formate is provided by PurU via hydrolysis of 10-formyl-tetrahydrofolate. The sequence is that of Formate-dependent phosphoribosylglycinamide formyltransferase from Burkholderia mallei (strain NCTC 10247).